We begin with the raw amino-acid sequence, 292 residues long: Acetyl-coenzyme A carboxylase carboxyl transferase subunit beta (292 aa).

Residues 29–292 enclose the CoA carboxyltransferase N-terminal domain; that stretch reads LWSKCPECGQ…HGCLQGSAAV (264 aa). Residues C33, C36, C52, and C55 each contribute to the Zn(2+) site. Residues 33–55 form a C4-type zinc finger; it reads CPECGQVVYRKDLLANASVCSNC.

The protein belongs to the AccD/PCCB family. Acetyl-CoA carboxylase is a heterohexamer composed of biotin carboxyl carrier protein (AccB), biotin carboxylase (AccC) and two subunits each of ACCase subunit alpha (AccA) and ACCase subunit beta (AccD). It depends on Zn(2+) as a cofactor.

It is found in the cytoplasm. The catalysed reaction is N(6)-carboxybiotinyl-L-lysyl-[protein] + acetyl-CoA = N(6)-biotinyl-L-lysyl-[protein] + malonyl-CoA. It participates in lipid metabolism; malonyl-CoA biosynthesis; malonyl-CoA from acetyl-CoA: step 1/1. Functionally, component of the acetyl coenzyme A carboxylase (ACC) complex. Biotin carboxylase (BC) catalyzes the carboxylation of biotin on its carrier protein (BCCP) and then the CO(2) group is transferred by the transcarboxylase to acetyl-CoA to form malonyl-CoA. In Synechococcus sp. (strain WH7803), this protein is Acetyl-coenzyme A carboxylase carboxyl transferase subunit beta.